We begin with the raw amino-acid sequence, 210 residues long: Orotate phosphoribosyltransferase (210 aa).

5-phospho-alpha-D-ribose 1-diphosphate contacts are provided by residues Arg-97, Lys-101, His-103, and 123 to 131; that span reads EDLISTGGS. An orotate-binding site is contributed by Ser-127.

Belongs to the purine/pyrimidine phosphoribosyltransferase family. PyrE subfamily. As to quaternary structure, homodimer. The cofactor is Mg(2+).

It carries out the reaction orotidine 5'-phosphate + diphosphate = orotate + 5-phospho-alpha-D-ribose 1-diphosphate. Its pathway is pyrimidine metabolism; UMP biosynthesis via de novo pathway; UMP from orotate: step 1/2. Functionally, catalyzes the transfer of a ribosyl phosphate group from 5-phosphoribose 1-diphosphate to orotate, leading to the formation of orotidine monophosphate (OMP). The polypeptide is Orotate phosphoribosyltransferase (Enterococcus faecalis (strain ATCC 700802 / V583)).